Here is a 168-residue protein sequence, read N- to C-terminus: MKNKKAIFPGTFDPLTNGHINLIERSIKVFDKVIIIVANNFKKNQLFNLKERMHHIKKATKNYKNIKVIGINDLTTNFARKNNIKILIRGIRNIFDFENEFIMEKTNKYLYPEMESIFMISDINWSYMSSSMIKEIIFYGGNLDYFLPECVIKDIKKKIKRKIVRNLN.

A substrate-binding site is contributed by T11. ATP-binding positions include 11–12 (TF) and H19. Substrate is bound by residues K43, T75, and R89. ATP-binding positions include 90–92 (GIR), E100, and 125–131 (WSYMSSS).

Belongs to the bacterial CoaD family. In terms of assembly, homohexamer. It depends on Mg(2+) as a cofactor.

It localises to the cytoplasm. The enzyme catalyses (R)-4'-phosphopantetheine + ATP + H(+) = 3'-dephospho-CoA + diphosphate. It functions in the pathway cofactor biosynthesis; coenzyme A biosynthesis; CoA from (R)-pantothenate: step 4/5. Reversibly transfers an adenylyl group from ATP to 4'-phosphopantetheine, yielding dephospho-CoA (dPCoA) and pyrophosphate. The polypeptide is Phosphopantetheine adenylyltransferase (Wigglesworthia glossinidia brevipalpis).